Consider the following 549-residue polypeptide: Exodeoxyribonuclease 7 large subunit (549 aa).

Residues 511-549 are disordered; it reads LVATDPPVDPKPTRKPVQKSSSPKPSSRKPKKSQQEDLF.

The protein belongs to the XseA family. In terms of assembly, heterooligomer composed of large and small subunits.

The protein localises to the cytoplasm. The enzyme catalyses Exonucleolytic cleavage in either 5'- to 3'- or 3'- to 5'-direction to yield nucleoside 5'-phosphates.. Its function is as follows. Bidirectionally degrades single-stranded DNA into large acid-insoluble oligonucleotides, which are then degraded further into small acid-soluble oligonucleotides. The protein is Exodeoxyribonuclease 7 large subunit of Beijerinckia indica subsp. indica (strain ATCC 9039 / DSM 1715 / NCIMB 8712).